We begin with the raw amino-acid sequence, 135 residues long: L-ectoine synthase (135 aa).

Belongs to the ectoine synthase family.

It catalyses the reaction (2S)-4-acetamido-2-aminobutanoate = L-ectoine + H2O. Its pathway is amine and polyamine biosynthesis; ectoine biosynthesis; L-ectoine from L-aspartate 4-semialdehyde: step 3/3. In terms of biological role, catalyzes the circularization of gamma-N-acetyl-alpha,gamma-diaminobutyric acid (ADABA) to ectoine (1,4,5,6-tetrahydro-2-methyl-4-pyrimidine carboxylic acid), which is an excellent osmoprotectant. In Saccharopolyspora erythraea (strain ATCC 11635 / DSM 40517 / JCM 4748 / NBRC 13426 / NCIMB 8594 / NRRL 2338), this protein is L-ectoine synthase.